We begin with the raw amino-acid sequence, 311 residues long: Methionyl-tRNA formyltransferase (311 aa).

Residue 109-112 (SLLP) coordinates (6S)-5,6,7,8-tetrahydrofolate.

This sequence belongs to the Fmt family.

The enzyme catalyses L-methionyl-tRNA(fMet) + (6R)-10-formyltetrahydrofolate = N-formyl-L-methionyl-tRNA(fMet) + (6S)-5,6,7,8-tetrahydrofolate + H(+). Attaches a formyl group to the free amino group of methionyl-tRNA(fMet). The formyl group appears to play a dual role in the initiator identity of N-formylmethionyl-tRNA by promoting its recognition by IF2 and preventing the misappropriation of this tRNA by the elongation apparatus. The protein is Methionyl-tRNA formyltransferase of Staphylococcus aureus (strain MW2).